The primary structure comprises 744 residues: Endonuclease MutS2 (744 aa).

An ATP-binding site is contributed by 315-322; the sequence is GPNMGGKT. The region spanning 668–743 is the Smr domain; it reads VDLRGLTVAE…GHGVTVVALR (76 aa).

It belongs to the DNA mismatch repair MutS family. MutS2 subfamily. As to quaternary structure, homodimer. Interacts with MutL. Binds to stalled ribosomes, contacting rRNA.

Nuclease activity is stimulated by interaction with MutL. ATPase activity is stimulated by dsDNA. Its function is as follows. Endonuclease that is involved in the suppression of homologous recombination and may thus have a key role in the control of bacterial genetic diversity. Cleaves the phosphate backbone of oligodeoxynucleotides non-sequence-specifically at the 3' side of the phosphates. Preferably incises the branched DNA structures, especially the D-loop structure over the Holliday junction. Has ATPase activity. Binds to dsDNA but not to ssDNA. In terms of biological role, acts as a ribosome collision sensor, splitting the ribosome into its 2 subunits. Detects stalled/collided 70S ribosomes which it binds and splits by an ATP-hydrolysis driven conformational change. Acts upstream of the ribosome quality control system (RQC), a ribosome-associated complex that mediates the extraction of incompletely synthesized nascent chains from stalled ribosomes and their subsequent degradation. Probably generates substrates for RQC. This chain is Endonuclease MutS2, found in Thermus thermophilus (strain ATCC 27634 / DSM 579 / HB8).